A 24-amino-acid chain; its full sequence is 33.0 kDa cold shock protein (24 aa).

It belongs to the thaumatin family. Homooligomer; disulfide-linked. In terms of processing, glycosylated.

It is found in the secreted. The protein resides in the extracellular space. It localises to the apoplast. The sequence is that of 33.0 kDa cold shock protein from Arachis hypogaea (Peanut).